Reading from the N-terminus, the 642-residue chain is Uromodulin (642 aa).

The first 26 residues, 1-26 (MGQLSSLTSVWMVVVVTSWVIIAANI), serve as a signal peptide directing secretion. The EGF-like 1 domain maps to 32-64 (RSCSECHSNATCMEDGMVTTCSCLVGFTGSGFE). 21 disulfide bridges follow: C34–C43, C37–C52, C54–C65, C71–C85, C79–C94, C96–C108, C114–C128, C122–C137, C139–C150, C152–C163, C157–C172, C176–C269, C197–C284, C219–C257, C225–C289, C250–C258, C299–C308, C302–C317, C319–C348, C336–C426, and C367–C390. Residue N40 is glycosylated (N-linked (GlcNAc...) asparagine). The EGF-like 2; calcium-binding domain occupies 67 to 109 (DLDECAIPGAHNCSEGSSCMNTLGSYLCTCPDGFRLTPGLGCI). N78 carries N-linked (GlcNAc...) asparagine glycosylation. Residues 110-151 (DVDECSEPGLSRCHALATCINNKGNYSCVCPAGYRGDGQHCE) form the EGF-like 3; calcium-binding domain. The N-linked (GlcNAc...) asparagine glycan is linked to N134. The segment at 152–173 (CSPGSCGPGLDCVPVGDALVCA) is beta hairpin. The segment at 174 to 293 (DPCQEHRILD…CYLAYCTDPT (120 aa)) is D10C. Residues N234 and N246 are each glycosylated (N-linked (GlcNAc...) asparagine). N277 is a glycosylation site (N-linked (GlcNAc...) asparagine). Positions 294-325 (SVLGTCEECSVEEDCKSHDGMWSCQCKQDFNV) constitute an EGF-like 4 domain. Residue N324 is glycosylated (N-linked (GlcNAc...) asparagine). Residues 335–430 (ECRPNDIKVS…KINFECSYPL (96 aa)) form a ZP-N region. The ZP domain occupies 335-590 (ECRPNDIKVS…PTCSGTRFRS (256 aa)). N-linked (GlcNAc...) asparagine glycosylation is found at N397 and N448. The flexible ZP-N/ZP-C linker; important for secretion and polymerization into filaments stretch occupies residues 431–454 (DMKVSLETSLQPIVSSLNISVGGT). Residues 455-465 (GMFTVRMALFQ) form an internal hydrophobic patch (IHP) region. Residues 455 to 590 (GMFTVRMALF…PTCSGTRFRS (136 aa)) are ZP-C. 3 disulfides stabilise this stretch: C507-C567, C528-C583, and C572-C579. N-linked (GlcNAc...) asparagine glycosylation occurs at N514. An essential for cleavage by HPN region spans residues 587 to 590 (RFRS). An external hydrophobic patch (EHP); regulates polymerization into filaments region spans residues 599 to 607 (VLNLGPITR). S620 carries GPI-anchor amidated serine lipidation. The propeptide at 621-642 (SLGFLKVCLPLLLSATLTLMFQ) is removed in mature form.

As to quaternary structure, homodimer that then polymerizes into long filaments. The filaments can additionally assemble laterally to form a sheet. The filaments consist of a zigzag-shaped backbone with laterally protruding arms which interact with bacterial adhesin fimH. Two fimH molecules can bind to a single UMOD monomer. N-glycosylated. In terms of processing, proteolytically cleaved at a conserved C-terminal proteolytic cleavage site to generate the secreted form found in urine. This cleavage is catalyzed by HPN. Detected in kidney and pancreas.

Its subcellular location is the apical cell membrane. It is found in the basolateral cell membrane. The protein resides in the cell projection. The protein localises to the cilium membrane. It localises to the secreted. Functionally, functions in biogenesis and organization of the apical membrane of epithelial cells of the thick ascending limb of Henle's loop (TALH), where it promotes formation of complex filamentous gel-like structure that may play a role in the water barrier permeability. May serve as a receptor for binding and endocytosis of cytokines (IL-1, IL-2) and TNF. Facilitates neutrophil migration across renal epithelia. In terms of biological role, in the urine, may contribute to colloid osmotic pressure, retards passage of positively charged electrolytes, and inhibits formation of liquid containing supersaturated salts and subsequent formation of salt crystals. Protects against urinary tract infections by binding to type 1 fimbriated E.coli. Binds to bacterial adhesin fimH which mediates the stable formation of bacterial aggregates, prevents the binding of E.coli to uroplakins UPK1A and UPK1B which act as urothelial receptors for type I fimbriae, and allows for pathogen clearance through micturation. Also promotes aggregation of other bacteria including K.pneumoniae, P.aeruginosa and S.mitis and so may also protect against other uropathogens. The sequence is that of Uromodulin (UMOD) from Canis lupus familiaris (Dog).